A 328-amino-acid polypeptide reads, in one-letter code: UPF0324 membrane protein AF_1621 (328 aa).

11 consecutive transmembrane segments (helical) span residues 21-39, 43-60, 73-95, 101-123, 130-152, 162-184, 191-213, 223-240, 245-267, 271-293, and 305-327; these read LQML…IINL, ALEP…AGNL, YVPF…PYLG, IVAA…SSRL, SILL…SPLI, AIMI…AHYA, FAVL…QLFG, GIRI…SIIY, FYVP…YLPG, QALR…YTVN, and LFAS…GSGA.

The protein belongs to the UPF0324 family.

The protein resides in the cell membrane. The chain is UPF0324 membrane protein AF_1621 from Archaeoglobus fulgidus (strain ATCC 49558 / DSM 4304 / JCM 9628 / NBRC 100126 / VC-16).